The sequence spans 491 residues: MPGLLVAGTTSDAGKSTLTAGLCRAFARRGVRVAPFKAQNMSNNSMVCQGPGGAGVEIGRAQWVQALAANATPEAAMNPVLLKPGSDHRSHVVLMGRSWGELASSNWFEGRQVLAETAHRAFDDLAARYDVVVAEGAGSPAEINLRAGDYVNMGLACHAELPTIVVGDIDRGGVFAAFFGTIALLSAEDQALVAGFVVNKFRGDLDLLAPGLRDLEGVTGRQVFGTLPWHADLWLDSEDALDLTGRRAASTGAHRVAVVRLPRISNFTDVDALGLEPDLDVVFASDPRGLGDADLIVVPGTRATIADLAWLRARGLDRALMAHVAAGKPLLGICGGFQMLGRVIRDPDGVEGPVAEADGLGLLDVETTFGAEKVLRLPRGQGLGVTASGYEIHHGRITAGDAAQQFLGGARDGQVFGTMWHGSLEGDALREAFLRETLGLTGSGTSFSAARERRLDLLGDLVERHLDVDALLALARHGCAPALPFLPPGAP.

A GATase cobBQ-type domain is found at 253-429 (AHRVAVVRLP…WHGSLEGDAL (177 aa)). Cys-334 (nucleophile) is an active-site residue. Residue His-421 is part of the active site.

Belongs to the CobB/CobQ family. CobQ subfamily.

The protein operates within cofactor biosynthesis; adenosylcobalamin biosynthesis. Functionally, catalyzes amidations at positions B, D, E, and G on adenosylcobyrinic A,C-diamide. NH(2) groups are provided by glutamine, and one molecule of ATP is hydrogenolyzed for each amidation. This is Cobyric acid synthase from Mycobacterium marinum (strain ATCC BAA-535 / M).